The following is a 458-amino-acid chain: O-acyltransferase WSD (458 aa).

H133 (proton acceptor) is an active-site residue.

Belongs to the long-chain O-acyltransferase family.

It catalyses the reaction a long chain fatty alcohol + a fatty acyl-CoA = a wax ester + CoA. The catalysed reaction is an acyl-CoA + a 1,2-diacyl-sn-glycerol = a triacyl-sn-glycerol + CoA. Its pathway is glycerolipid metabolism; triacylglycerol biosynthesis. Its function is as follows. Bifunctional wax ester synthase/diacylglycerol acyltransferase (WS and DGAT). Catalyzes the terminal and only committed step in triacylglycerol synthesis by using diacylglycerol and fatty acyl CoA as substrates. Required for storage lipid synthesis. WS uses C(12)-CoA to C(18)-CoA substrates whereas DGAT prefers C(20)-CoA. Upon expression in E.coli and Pseudomonas citronellolis (DSM 50332) both WS and DGAT activities increase. The sequence is that of O-acyltransferase WSD (wax-dgaT) from Acinetobacter baylyi (strain ATCC 33305 / BD413 / ADP1).